The following is a 141-amino-acid chain: MIIGIGSDLIDITRIAKVIDRHGERFLDRIFTETEQARAGRRDKQPNLVAATYAKRFAAKEACSKALGTGIRQGVWWRDMGVVNQRGGRPTMLLTGGARARLDALTPPGMTAQIDLSITDEWPLAQAFVVISAIPAATSGT.

Positions 8 and 61 each coordinate Mg(2+).

Belongs to the P-Pant transferase superfamily. AcpS family. It depends on Mg(2+) as a cofactor.

Its subcellular location is the cytoplasm. The enzyme catalyses apo-[ACP] + CoA = holo-[ACP] + adenosine 3',5'-bisphosphate + H(+). In terms of biological role, transfers the 4'-phosphopantetheine moiety from coenzyme A to a Ser of acyl-carrier-protein. In Rhodopseudomonas palustris (strain HaA2), this protein is Holo-[acyl-carrier-protein] synthase.